The following is a 413-amino-acid chain: Multifunctional CCA protein (413 aa).

The ATP site is built by glycine 8 and arginine 11. CTP-binding residues include glycine 8 and arginine 11. Residues aspartate 21 and aspartate 23 each contribute to the Mg(2+) site. 3 residues coordinate ATP: arginine 91, arginine 143, and arginine 146. Residues arginine 91, arginine 143, and arginine 146 each coordinate CTP. Positions 232–333 constitute an HD domain; the sequence is TGVHVMMVVD…VRLFERSDAL (102 aa).

Belongs to the tRNA nucleotidyltransferase/poly(A) polymerase family. Bacterial CCA-adding enzyme type 1 subfamily. In terms of assembly, monomer. Can also form homodimers and oligomers. Requires Mg(2+) as cofactor. Ni(2+) is required as a cofactor.

The catalysed reaction is a tRNA precursor + 2 CTP + ATP = a tRNA with a 3' CCA end + 3 diphosphate. It carries out the reaction a tRNA with a 3' CCA end + 2 CTP + ATP = a tRNA with a 3' CCACCA end + 3 diphosphate. In terms of biological role, catalyzes the addition and repair of the essential 3'-terminal CCA sequence in tRNAs without using a nucleic acid template. Adds these three nucleotides in the order of C, C, and A to the tRNA nucleotide-73, using CTP and ATP as substrates and producing inorganic pyrophosphate. tRNA 3'-terminal CCA addition is required both for tRNA processing and repair. Also involved in tRNA surveillance by mediating tandem CCA addition to generate a CCACCA at the 3' terminus of unstable tRNAs. While stable tRNAs receive only 3'-terminal CCA, unstable tRNAs are marked with CCACCA and rapidly degraded. The chain is Multifunctional CCA protein from Burkholderia vietnamiensis (strain G4 / LMG 22486) (Burkholderia cepacia (strain R1808)).